The primary structure comprises 409 residues: Argininosuccinate synthase (409 aa).

Residues 11 to 19 and alanine 38 each bind ATP; that span reads AYSGGLDTS. 2 residues coordinate L-citrulline: tyrosine 91 and serine 96. Residue glycine 121 coordinates ATP. Residues threonine 123, asparagine 127, and aspartate 128 each coordinate L-aspartate. Asparagine 127 serves as a coordination point for L-citrulline. 5 residues coordinate L-citrulline: arginine 131, serine 182, serine 191, glutamate 267, and tyrosine 279.

The protein belongs to the argininosuccinate synthase family. Type 1 subfamily. In terms of assembly, homotetramer.

It localises to the cytoplasm. The enzyme catalyses L-citrulline + L-aspartate + ATP = 2-(N(omega)-L-arginino)succinate + AMP + diphosphate + H(+). The protein operates within amino-acid biosynthesis; L-arginine biosynthesis; L-arginine from L-ornithine and carbamoyl phosphate: step 2/3. In Xanthobacter autotrophicus (strain ATCC BAA-1158 / Py2), this protein is Argininosuccinate synthase.